The primary structure comprises 574 residues: Septation ring formation regulator EzrA (574 aa).

The Extracellular segment spans residues 1-7 (MSSGIIL). Residues 8 to 26 (LIVAIVLLVIIAYLVGVII) form a helical membrane-spanning segment. Over 27-574 (RKRNDSLITS…YEKTREHIRF (548 aa)) the chain is Cytoplasmic. Coiled coils occupy residues 102–141 (NFIR…EEKN), 274–350 (ELVT…ETES), and 459–520 (QLEA…SFEA).

This sequence belongs to the EzrA family.

It localises to the cell membrane. Its function is as follows. Negative regulator of FtsZ ring formation; modulates the frequency and position of FtsZ ring formation. Inhibits FtsZ ring formation at polar sites. Interacts either with FtsZ or with one of its binding partners to promote depolymerization. The protein is Septation ring formation regulator EzrA of Streptococcus pyogenes serotype M1.